Here is a 943-residue protein sequence, read N- to C-terminus: Lysine-specific demethylase JMJ21 (943 aa).

An F-box domain is found at 14–60 (LGSLSVLPDETICVLLEYLAPRDIAHLACVSSVMYILCNEEPLWMSL). The JmjC domain occupies 216–379 (EAAPELLKDY…FVCLDMAPGY (164 aa)). The Fe cation site is built by H262, D264, and H347. Over residues 396-410 (NSEDLEEETHDEEDN) the composition is skewed to acidic residues. Positions 396 to 438 (NSEDLEEETHDEEDNTLSYSDLTRKEKRTRMNGGGETENREED) are disordered.

The protein belongs to the JARID1 histone demethylase family. It depends on Fe(2+) as a cofactor. In terms of tissue distribution, mostly expressed in leaves, and, to a lower extent, in inflorescences, roots, siliques and stems.

The protein resides in the nucleus. May function as histone H3 lysine demethylase and be involved in regulation of gene expression. The protein is Lysine-specific demethylase JMJ21 of Arabidopsis thaliana (Mouse-ear cress).